The following is a 496-amino-acid chain: Probable cytosol aminopeptidase (496 aa).

Positions 257 and 262 each coordinate Mn(2+). The active site involves Lys269. Mn(2+) is bound by residues Asp281, Asp341, and Glu343. Arg345 is an active-site residue.

The protein belongs to the peptidase M17 family. Mn(2+) serves as cofactor.

The protein resides in the cytoplasm. The enzyme catalyses Release of an N-terminal amino acid, Xaa-|-Yaa-, in which Xaa is preferably Leu, but may be other amino acids including Pro although not Arg or Lys, and Yaa may be Pro. Amino acid amides and methyl esters are also readily hydrolyzed, but rates on arylamides are exceedingly low.. It catalyses the reaction Release of an N-terminal amino acid, preferentially leucine, but not glutamic or aspartic acids.. Presumably involved in the processing and regular turnover of intracellular proteins. Catalyzes the removal of unsubstituted N-terminal amino acids from various peptides. The protein is Probable cytosol aminopeptidase of Synechococcus sp. (strain CC9311).